Reading from the N-terminus, the 88-residue chain is MVKLRLKRCGRKQRAVYRIVAIDVRSRREGKDLQKVGFYDPIKNQTYLNVPAILYFLEKGAQPTETVQDILKKAEVFKELRLNQPKFN.

The protein belongs to the bacterial ribosomal protein bS16 family.

It is found in the plastid. The protein localises to the chloroplast. The sequence is that of Small ribosomal subunit protein bS16c from Solanum bulbocastanum (Wild potato).